The sequence spans 576 residues: Aspartate--tRNA ligase, cytoplasmic 1 (576 aa).

The tract at residues 1–78 (MSETTPVPVG…NWGELPMNQS (78 aa)) is disordered. The segment covering 20 to 43 (LKKEQKKLEKEKKIAEAKAKKAAE) has biased composition (basic and acidic residues). Glu302 contributes to the L-aspartate binding site. The tract at residues 324–327 (QLYK) is aspartate. Arg346 is an L-aspartate binding site. ATP contacts are provided by residues 346-348 (RAE), 354-356 (RHL), and Glu499. The L-aspartate site is built by Ser502 and Arg506. 547–550 (GLER) contributes to the ATP binding site.

This sequence belongs to the class-II aminoacyl-tRNA synthetase family. Type 2 subfamily.

It localises to the cytoplasm. It carries out the reaction tRNA(Asp) + L-aspartate + ATP = L-aspartyl-tRNA(Asp) + AMP + diphosphate. The protein is Aspartate--tRNA ligase, cytoplasmic 1 (aspS1) of Dictyostelium discoideum (Social amoeba).